A 376-amino-acid polypeptide reads, in one-letter code: tRNA-specific 2-thiouridylase MnmA (376 aa).

Residues 16–23 (AMSGGVDS) and L42 contribute to the ATP site. The active-site Nucleophile is C111. Residues C111 and C210 are joined by a disulfide bond. G135 is an ATP binding site. An interaction with tRNA region spans residues 158–160 (KDQ). C210 acts as the Cysteine persulfide intermediate in catalysis.

Belongs to the MnmA/TRMU family.

It localises to the cytoplasm. The enzyme catalyses S-sulfanyl-L-cysteinyl-[protein] + uridine(34) in tRNA + AH2 + ATP = 2-thiouridine(34) in tRNA + L-cysteinyl-[protein] + A + AMP + diphosphate + H(+). Functionally, catalyzes the 2-thiolation of uridine at the wobble position (U34) of tRNA, leading to the formation of s(2)U34. This chain is tRNA-specific 2-thiouridylase MnmA, found in Streptomyces coelicolor (strain ATCC BAA-471 / A3(2) / M145).